The sequence spans 662 residues: Polyunsaturated fatty acid lipoxygenase ALOX15 (662 aa).

In terms of domain architecture, PLAT spans 2 to 114 (GLYRIRVSTG…VLSLPEGTGR (113 aa)). The 548-residue stretch at 115 to 662 (TVGDDPQGLF…PSIVENSVAI (548 aa)) folds into the Lipoxygenase domain. Positions 360, 365, 540, 544, and 662 each coordinate Fe cation.

Belongs to the lipoxygenase family. Interacts with PEBP1; in response to IL13/interleukin-13, prevents the interaction of PEBP1 with RAF1 to activate the ERK signaling cascade. It depends on Fe cation as a cofactor.

The protein localises to the cytoplasm. The protein resides in the cytosol. It is found in the cell membrane. Its subcellular location is the lipid droplet. The catalysed reaction is (5Z,8Z,11Z,14Z)-eicosatetraenoate + O2 = (12S)-hydroperoxy-(5Z,8Z,10E,14Z)-eicosatetraenoate. It catalyses the reaction (9Z,12Z)-octadecadienoate + O2 = (13S)-hydroperoxy-(9Z,11E)-octadecadienoate. The enzyme catalyses (5Z,8Z,11Z,14Z)-eicosatetraenoate + O2 = (15S)-hydroperoxy-(5Z,8Z,11Z,13E)-eicosatetraenoate. It carries out the reaction (5Z,8Z,11Z,14Z)-eicosatetraenoate + 2 O2 = (14R,15S)-dihydroperoxy-(5Z,8Z,10E,12E)-eicosatetraenoate. The catalysed reaction is (5Z,8Z,11Z,14Z)-eicosatetraenoate + 2 O2 = (8S,15S)-dihydroperoxy-(5Z,9E,11Z,13E)-eicosatetraenoate. It catalyses the reaction (14S,15R)-epoxy-(5Z,8Z,11Z)-eicosatrienoate + O2 = (8S)-hydroperoxy-(14S,15R)-epoxy-(5Z,9E,11Z)-eicosatrienoate. The enzyme catalyses (14S,15R)-epoxy-(5Z,8Z,11Z)-eicosatrienoate + O2 = (12S)-hydroperoxy-(14S,15R)-epoxy-(5Z,8Z,10E)-eicosatrienoate. It carries out the reaction (14R,15S)-epoxy-(5Z,8Z,11Z)-eicosatrienoate + O2 = (5S)-hydroperoxy-(14R,15S)-epoxy-(6E,8Z,11Z)-eicosatrienoate. The catalysed reaction is (14R,15S)-epoxy-(5Z,8Z,11Z)-eicosatrienoate + O2 = (12S)-hydroperoxy-(14R,15S)-epoxy-(5Z,8Z,10E)-eicosatrienoate. It catalyses the reaction (15R)-hydroperoxy-(5Z,8Z,11Z,13E)-eicosatetraenoate = 15-oxo-(5Z,8Z,11Z,13E)-eicosatetraenoate + H2O. The enzyme catalyses (15S)-hydroperoxy-(5Z,8Z,11Z,13E)-eicosatetraenoate = (14S,15S)-epoxy-(5Z,8Z,10E,12E)-eicosatetraenoate + H2O. It carries out the reaction (12S)-hydroperoxy-(5Z,8Z,10E,14Z)-eicosatetraenoate = (8S)-hydroxy-(11S,12S)-epoxy-(5Z,9E,14Z)-eicosatrienoate. The catalysed reaction is (4Z,7Z,10Z,13Z,16Z)-docosapentaenoate + O2 = 14-hydroperoxy-(4Z,7Z,10Z,12E,16Z)-docosapentaenoate. It catalyses the reaction (7Z,10Z,13Z,16Z,19Z)-docosapentaenoate + O2 = 14-hydroperoxy-(7Z,10Z,12E,16Z,19Z)-docosapentaenoate. The enzyme catalyses (4Z,7Z,10Z,13Z,16Z,19Z)-docosahexaenoate + O2 = (14S)-hydroperoxy-(4Z,7Z,10Z,12E,16Z,19Z)-docosahexaenoate. It carries out the reaction (4Z,7Z,10Z,13Z,16Z,19Z)-docosahexaenoate + O2 = (17S)-hydroperoxy-(4Z,7Z,10Z,13Z,15E,19Z)-docosahexaenoate. The catalysed reaction is (7S)-hydroperoxy-(4Z,8E,10Z,13Z,16Z,19Z)-docosahexaenoate + O2 = (7S,14S)-dihydroperoxy-(4Z,8E,10Z,12E,16Z,19Z)-docosahexaenoate. It catalyses the reaction (7S)-hydroperoxy-(4Z,8E,10Z,13Z,16Z,19Z)-docosahexaenoate + O2 = (7S,17S)-dihydroperoxy-(4Z,8E,10Z,13Z,15E,19Z)-docosahexaenoate. The enzyme catalyses (4Z,7Z,10Z,13Z,16Z,19Z)-docosahexaenoate + O2 = (11S)-hydroperoxy-(4Z,7Z,9E,13Z,16Z,19Z)-docosahexaenoate. It carries out the reaction N-(5Z,8Z,11Z,14Z)-eicosatetraenoyl-taurine + O2 = N-(12S)-hydroperoxy-(5Z,8Z,10E,14Z)-eicosatetraenoyl-taurine. The catalysed reaction is N-(5Z,8Z,11Z,14Z)-eicosatetraenoyl-gamma-aminobutanoate + O2 = N-(12S)-hydroperoxy-(5Z,8Z,10E,14Z)-eicosatetraenoyl-gamma-aminobutanoate. It catalyses the reaction N-(5Z,8Z,11Z,14Z)-eicosatetraenoyl-glycine + O2 = N-(12S)-hydroperoxy-(5Z,8Z,10E,14Z)-eicosatetraenoyl-glycine. The enzyme catalyses N-(5Z,8Z,11Z,14Z)-eicosatetraenoyl-L-alanine + O2 = N-(12S)-hydroperoxy-(5Z,8Z,10E,14Z)-eicosatetraenoyl-alanine. It carries out the reaction N-(5Z,8Z,11Z,14Z)-eicosatetraenoyl-taurine + O2 = N-(15S)-hydroperoxy-(5Z,8Z,11Z,13E)-eicosatetraenoyl-taurine. The catalysed reaction is N-(5Z,8Z,11Z,14Z)-eicosatetraenoyl-gamma-aminobutanoate + O2 = N-(15S)-hydroperoxy-(5Z,8Z,11Z,13E)-eicosatetraenoyl-gamma-aminobutanoate. It catalyses the reaction N-(5Z,8Z,11Z,14Z)-eicosatetraenoyl-glycine + O2 = N-(15S)-hydroperoxy-(5Z,8Z,11Z,13E)-eicosatetraenoyl-glycine. The enzyme catalyses N-(5Z,8Z,11Z,14Z)-eicosatetraenoyl-L-alanine + O2 = N-(15S)-hydroperoxy-(5Z,8Z,11Z,13E)-eicosatetraenoyl-alanine. It functions in the pathway lipid metabolism; hydroperoxy eicosatetraenoic acid biosynthesis. Functionally, non-heme iron-containing dioxygenase that catalyzes the stereo-specific peroxidation of free and esterified polyunsaturated fatty acids generating a spectrum of bioactive lipid mediators. It inserts peroxyl groups at C12 or C15 of arachidonate ((5Z,8Z,11Z,14Z)-eicosatetraenoate) producing both 12-hydroperoxyeicosatetraenoate/12-HPETE and 15-hydroperoxyeicosatetraenoate/15-HPETE. It may then act on 12-HPETE to produce hepoxilins, which may show pro-inflammatory properties. Can also peroxidize linoleate ((9Z,12Z)-octadecadienoate) to 13-hydroperoxyoctadecadienoate. May participate in the sequential oxidations of DHA ((4Z,7Z,10Z,13Z,16Z,19Z)-docosahexaenoate) to generate specialized pro-resolving mediators (SPMs)like resolvin D5 ((7S,17S)-diHPDHA) and (7S,14S)-diHPDHA, that actively down-regulate the immune response and have anti-aggregation properties with platelets. Can convert epoxy fatty acids to hydroperoxy-epoxides derivatives followed by an intramolecular nucleophilic substitution leading to the formation of monocyclic endoperoxides. Plays an important role during the maintenance of self-tolerance by peroxidizing membrane-bound phosphatidylethanolamine which can then signal the sorting process for clearance of apoptotic cells during inflammation and prevent an autoimmune response. In addition to its role in the immune and inflammatory responses, this enzyme may play a role in epithelial wound healing in the cornea through production of lipoxin A4 (LXA(4)) and docosahexaenoic acid-derived neuroprotectin D1 (NPD1; 10R,17S-HDHA), both lipid autacoids exhibit anti-inflammatory and neuroprotective properties. Furthermore, it may regulate actin polymerization which is crucial for several biological processes such as the phagocytosis of apoptotic cells. It is also implicated in the generation of endogenous ligands for peroxisome proliferator activated receptor (PPAR-gamma), hence modulating macrophage development and function. It may also exert a negative effect on skeletal development by regulating bone mass through this pathway. As well as participates in ER stress and downstream inflammation in adipocytes, pancreatic islets, and liver. Finally, it is also involved in the cellular response to IL13/interleukin-13. The polypeptide is Polyunsaturated fatty acid lipoxygenase ALOX15 (Pongo abelii (Sumatran orangutan)).